A 1099-amino-acid polypeptide reads, in one-letter code: ATP-dependent helicase/deoxyribonuclease subunit B (1099 aa).

Cys766, Cys1056, Cys1059, and Cys1065 together coordinate [4Fe-4S] cluster.

The protein belongs to the helicase family. AddB/RexB type 2 subfamily. In terms of assembly, heterodimer of AddA and RexB. Mg(2+) is required as a cofactor. It depends on [4Fe-4S] cluster as a cofactor.

Functionally, the heterodimer acts as both an ATP-dependent DNA helicase and an ATP-dependent, dual-direction single-stranded exonuclease. Recognizes the chi site generating a DNA molecule suitable for the initiation of homologous recombination. This subunit has 5' -&gt; 3' nuclease activity but not helicase activity. This Lactococcus lactis subsp. lactis (strain IL1403) (Streptococcus lactis) protein is ATP-dependent helicase/deoxyribonuclease subunit B.